We begin with the raw amino-acid sequence, 105 residues long: MAEWKGEYVSPYAEHGKKSEQVKKITVSIPLKVLKILTDERTRRQVNNLRHATNSELLCEAFLHAFTGQPLPDDHDLRKERNDEIPEVAKDMMREMGIDPDTWEY.

Belongs to the MetJ family. As to quaternary structure, homodimer.

The protein resides in the cytoplasm. Its function is as follows. This regulatory protein, when combined with SAM (S-adenosylmethionine) represses the expression of the methionine regulon and of enzymes involved in SAM synthesis. The protein is Met repressor of Sodalis glossinidius (strain morsitans).